A 242-amino-acid chain; its full sequence is Basic agglutinin (242 aa).

2 N-linked (GlcNAc...) asparagine glycosylation sites follow: asparagine 45 and asparagine 220.

It belongs to the leguminous lectin family.

Functionally, lectin. This chain is Basic agglutinin (WBAI), found in Psophocarpus tetragonolobus (Winged bean).